The following is a 149-amino-acid chain: MAARLMKEYKVLQNEEFEDILLYPRDESDLYRWVAIIKGPPDTPYENGKFELDISVPTNYPLQPPTIKFVTKIFHPNIHFKTGEICLDLLKTSWSAIYTLQSVCRSIIALLSLPEADSPLNCDAGNLIRNGDVKGHDSLARMYTRLYGC.

The UBC core domain maps to methionine 1–cysteine 149. Cysteine 86 (glycyl thioester intermediate) is an active-site residue.

The protein belongs to the ubiquitin-conjugating enzyme family.

The enzyme catalyses S-ubiquitinyl-[E1 ubiquitin-activating enzyme]-L-cysteine + [E2 ubiquitin-conjugating enzyme]-L-cysteine = [E1 ubiquitin-activating enzyme]-L-cysteine + S-ubiquitinyl-[E2 ubiquitin-conjugating enzyme]-L-cysteine.. The protein operates within protein modification; protein ubiquitination. Functionally, catalyzes the covalent attachment of ubiquitin to other proteins. Essential for peroxisome biogenesis. The chain is Ubiquitin-conjugating enzyme E2 pex4 (pex4) from Dictyostelium discoideum (Social amoeba).